Consider the following 382-residue polypeptide: 4-hydroxy-3-methylbut-2-en-1-yl diphosphate synthase (flavodoxin) (382 aa).

Residues Cys-290, Cys-293, Cys-327, and Glu-334 each coordinate [4Fe-4S] cluster.

It belongs to the IspG family. Requires [4Fe-4S] cluster as cofactor.

The enzyme catalyses (2E)-4-hydroxy-3-methylbut-2-enyl diphosphate + oxidized [flavodoxin] + H2O + 2 H(+) = 2-C-methyl-D-erythritol 2,4-cyclic diphosphate + reduced [flavodoxin]. Its pathway is isoprenoid biosynthesis; isopentenyl diphosphate biosynthesis via DXP pathway; isopentenyl diphosphate from 1-deoxy-D-xylulose 5-phosphate: step 5/6. In terms of biological role, converts 2C-methyl-D-erythritol 2,4-cyclodiphosphate (ME-2,4cPP) into 1-hydroxy-2-methyl-2-(E)-butenyl 4-diphosphate. The sequence is that of 4-hydroxy-3-methylbut-2-en-1-yl diphosphate synthase (flavodoxin) from Rhodopirellula baltica (strain DSM 10527 / NCIMB 13988 / SH1).